The following is a 257-amino-acid chain: 3-alpha-hydroxysteroid dehydrogenase/carbonyl reductase (257 aa).

NAD(+) is bound by residues 8-13 (GCATGI), aspartate 32, 41-42 (DL), and glycine 71. Serine 114 is a binding site for substrate. Residues tyrosine 155 and lysine 159 each coordinate NAD(+). The active-site Proton acceptor is tyrosine 155.

The protein belongs to the short-chain dehydrogenases/reductases (SDR) family. Homodimer.

It is found in the cytoplasm. It carries out the reaction a 3alpha-hydroxysteroid + NADP(+) = a 3-oxosteroid + NADPH + H(+). The enzyme catalyses a 3alpha-hydroxysteroid + NAD(+) = a 3-oxosteroid + NADH + H(+). Catalyzes the reversible interconversion of hydroxy and oxo groups at position 3 of the steroid nucleus. Along with the 3 alpha-hydroxysteroid dehydrogenase and 3-oxo-reductase activities towards a variety of cis or trans fused A/B ring steroids, it also reduces several xenobiotic carbonyl compounds, including a metyrapone-based class of insecticides, to the respective alcohol metabolites. No detectable activity on testosterone, progesterone or 3-oxo-desogestrel. The polypeptide is 3-alpha-hydroxysteroid dehydrogenase/carbonyl reductase (hsdA) (Comamonas testosteroni (Pseudomonas testosteroni)).